The primary structure comprises 352 residues: tRNA pseudouridine synthase D (352 aa).

The Nucleophile role is filled by aspartate 81. Positions 157–303 (GVPNYFGGQR…MSHERRILRL (147 aa)) constitute a TRUD domain.

It belongs to the pseudouridine synthase TruD family.

The enzyme catalyses uridine(13) in tRNA = pseudouridine(13) in tRNA. Responsible for synthesis of pseudouridine from uracil-13 in transfer RNAs. The sequence is that of tRNA pseudouridine synthase D from Pseudomonas putida (strain W619).